Consider the following 290-residue polypeptide: Lipoyl synthase (290 aa).

7 residues coordinate [4Fe-4S] cluster: C44, C49, C55, C70, C74, C77, and S281. The Radical SAM core domain occupies 56 to 270 (WRCGTATFMI…KQIGLEKGFS (215 aa)).

The protein belongs to the radical SAM superfamily. Lipoyl synthase family. It depends on [4Fe-4S] cluster as a cofactor.

It is found in the cytoplasm. The catalysed reaction is [[Fe-S] cluster scaffold protein carrying a second [4Fe-4S](2+) cluster] + N(6)-octanoyl-L-lysyl-[protein] + 2 oxidized [2Fe-2S]-[ferredoxin] + 2 S-adenosyl-L-methionine + 4 H(+) = [[Fe-S] cluster scaffold protein] + N(6)-[(R)-dihydrolipoyl]-L-lysyl-[protein] + 4 Fe(3+) + 2 hydrogen sulfide + 2 5'-deoxyadenosine + 2 L-methionine + 2 reduced [2Fe-2S]-[ferredoxin]. The protein operates within protein modification; protein lipoylation via endogenous pathway; protein N(6)-(lipoyl)lysine from octanoyl-[acyl-carrier-protein]: step 2/2. Functionally, catalyzes the radical-mediated insertion of two sulfur atoms into the C-6 and C-8 positions of the octanoyl moiety bound to the lipoyl domains of lipoate-dependent enzymes, thereby converting the octanoylated domains into lipoylated derivatives. The sequence is that of Lipoyl synthase from Treponema denticola (strain ATCC 35405 / DSM 14222 / CIP 103919 / JCM 8153 / KCTC 15104).